Reading from the N-terminus, the 287-residue chain is Toxin zeta (287 aa).

40–47 (GQPGSGKT) serves as a coordination point for ATP. Asn-66 contacts substrate. The active-site Proton acceptor is Asp-67. The substrate site is built by Glu-100, Thr-118, Arg-120, and Thr-128. The disordered stretch occupies residues 267-287 (KLESLQPPTPPIPKTPKLPGI). The segment covering 273–287 (PPTPPIPKTPKLPGI) has biased composition (pro residues).

The protein belongs to the zeta toxin family. In terms of assembly, in the presence of the epsilon antitoxin forms an inactive PezA(2)PezT(2) heterotetramer. The heterotetramer is still able to bind the UNAG substrate.

It carries out the reaction UDP-N-acetyl-alpha-D-glucosamine + ATP = UDP-N-acetyl-alpha-D-glucosamine 3'-phosphate + ADP + H(+). In terms of biological role, toxic component of a type II toxin-antitoxin (TA) system. Phosphorylates UDP-N-acetyl-D-glucosamine (UNAG) on the 3'-hydroxyl group of the N-acetyl-D-glucosamine moiety, yielding UNAG-3P. UNAG-3P inhibits MurA, the first committed step in cell wall synthesis, which is then blocked. Phosphorylation is inhibited by cognate epsilon antitoxin. Part of a postsegregational killing (PSK) system involved in the killing of plasmid-free cells. The zeta toxin induces programmed cell death. In Streptococcus pyogenes, this protein is Toxin zeta.